A 398-amino-acid polypeptide reads, in one-letter code: Cytochrome b (398 aa).

Transmembrane regions (helical) follow at residues Phe-38–Met-58, Trp-82–Phe-104, Val-119–Val-139, and Phe-185–Ala-205. Positions 88 and 102 each coordinate heme b. Positions 189 and 203 each coordinate heme b. An a ubiquinone-binding site is contributed by His-208. The next 4 membrane-spanning stretches (helical) occupy residues Phe-231–Phe-251, Ala-295–Lys-315, Ile-327–Cys-347, and Phe-354–Pro-373.

The protein belongs to the cytochrome b family. The main subunits of complex b-c1 are: cytochrome b, cytochrome c1 and the Rieske protein. Heme b is required as a cofactor.

It is found in the mitochondrion inner membrane. In terms of biological role, component of the ubiquinol-cytochrome c reductase complex (complex III or cytochrome b-c1 complex) that is part of the mitochondrial respiratory chain. The b-c1 complex mediates electron transfer from ubiquinol to cytochrome c. Contributes to the generation of a proton gradient across the mitochondrial membrane that is then used for ATP synthesis. This Triticum aestivum (Wheat) protein is Cytochrome b (MT-CYB).